Here is a 691-residue protein sequence, read N- to C-terminus: Elongation factor G (691 aa).

A tr-type G domain is found at 8 to 283; sequence EDYRNFGIMA…AVVDFLPNPT (276 aa). GTP-binding positions include 17 to 24, 81 to 85, and 135 to 138; these read AHIDAGKT, DTPGH, and NKMD.

Belongs to the TRAFAC class translation factor GTPase superfamily. Classic translation factor GTPase family. EF-G/EF-2 subfamily.

The protein localises to the cytoplasm. In terms of biological role, catalyzes the GTP-dependent ribosomal translocation step during translation elongation. During this step, the ribosome changes from the pre-translocational (PRE) to the post-translocational (POST) state as the newly formed A-site-bound peptidyl-tRNA and P-site-bound deacylated tRNA move to the P and E sites, respectively. Catalyzes the coordinated movement of the two tRNA molecules, the mRNA and conformational changes in the ribosome. In Maricaulis maris (strain MCS10) (Caulobacter maris), this protein is Elongation factor G.